The chain runs to 99 residues: MLLEIITAYKIGTILFLIGILGFIINRQNILLLIISIEMTLLAISFIIICSALFLDDSAAACFSLYILALAGSEAAIGLSLLVLFHRFRGSVLISASRQ.

Transmembrane regions (helical) follow at residues 5–25 (IITA…GFII), 30–50 (ILLL…IIIC), and 65–85 (LYIL…LVLF).

Belongs to the complex I subunit 4L family.

Its subcellular location is the mitochondrion membrane. It catalyses the reaction a ubiquinone + NADH + 5 H(+)(in) = a ubiquinol + NAD(+) + 4 H(+)(out). Its function is as follows. Core subunit of the mitochondrial membrane respiratory chain NADH dehydrogenase (Complex I) that is believed to belong to the minimal assembly required for catalysis. Complex I functions in the transfer of electrons from NADH to the respiratory chain. The immediate electron acceptor for the enzyme is believed to be ubiquinone. The polypeptide is NADH-ubiquinone oxidoreductase chain 4L (ND4L) (Allomyces macrogynus).